Reading from the N-terminus, the 655-residue chain is p-hydroxybenzoic acid efflux pump subunit AaeB (655 aa).

11 helical membrane-spanning segments follow: residues 13–33, 38–58, 69–89, 93–113, 121–141, 152–172, 370–390, 407–427, 431–451, 459–479, and 482–502; these read FAVK…HFQL, WAVL…GGEP, LRII…ISMI, LLMI…SSLV, WGLS…EPLL, EIVI…PRSI, LFWL…IAVV, FIYG…VIIP, QSML…GIEV, MGAL…TFHF, and FLDS…VILL.

It belongs to the aromatic acid exporter ArAE (TC 2.A.85) family.

It localises to the cell inner membrane. In terms of biological role, forms an efflux pump with AaeA. Could function as a metabolic relief valve, allowing to eliminate certain compounds when they accumulate to high levels in the cell. The polypeptide is p-hydroxybenzoic acid efflux pump subunit AaeB (Salmonella enteritidis PT4 (strain P125109)).